Here is a 553-residue protein sequence, read N- to C-terminus: Arginine--tRNA ligase (553 aa).

The short motif at 123–133 is the 'HIGH' region element; that stretch reads ANPTGPLTIGR.

This sequence belongs to the class-I aminoacyl-tRNA synthetase family. In terms of assembly, monomer.

It localises to the cytoplasm. It carries out the reaction tRNA(Arg) + L-arginine + ATP = L-arginyl-tRNA(Arg) + AMP + diphosphate. This is Arginine--tRNA ligase from Chlorobium phaeobacteroides (strain BS1).